The following is a 126-amino-acid chain: Transcription antitermination protein NusB (126 aa).

The protein belongs to the NusB family.

Its function is as follows. Involved in transcription antitermination. Required for transcription of ribosomal RNA (rRNA) genes. Binds specifically to the boxA antiterminator sequence of the ribosomal RNA (rrn) operons. The chain is Transcription antitermination protein NusB from Oceanobacillus iheyensis (strain DSM 14371 / CIP 107618 / JCM 11309 / KCTC 3954 / HTE831).